Consider the following 189-residue polypeptide: Crossover junction endodeoxyribonuclease RuvC (189 aa).

Residues D11, E71, and D143 contribute to the active site. Residues D11, E71, and D143 each contribute to the Mg(2+) site.

The protein belongs to the RuvC family. Homodimer which binds Holliday junction (HJ) DNA. The HJ becomes 2-fold symmetrical on binding to RuvC with unstacked arms; it has a different conformation from HJ DNA in complex with RuvA. In the full resolvosome a probable DNA-RuvA(4)-RuvB(12)-RuvC(2) complex forms which resolves the HJ. Mg(2+) is required as a cofactor.

It localises to the cytoplasm. It catalyses the reaction Endonucleolytic cleavage at a junction such as a reciprocal single-stranded crossover between two homologous DNA duplexes (Holliday junction).. Its function is as follows. The RuvA-RuvB-RuvC complex processes Holliday junction (HJ) DNA during genetic recombination and DNA repair. Endonuclease that resolves HJ intermediates. Cleaves cruciform DNA by making single-stranded nicks across the HJ at symmetrical positions within the homologous arms, yielding a 5'-phosphate and a 3'-hydroxyl group; requires a central core of homology in the junction. The consensus cleavage sequence is 5'-(A/T)TT(C/G)-3'. Cleavage occurs on the 3'-side of the TT dinucleotide at the point of strand exchange. HJ branch migration catalyzed by RuvA-RuvB allows RuvC to scan DNA until it finds its consensus sequence, where it cleaves and resolves the cruciform DNA. In Methylorubrum extorquens (strain CM4 / NCIMB 13688) (Methylobacterium extorquens), this protein is Crossover junction endodeoxyribonuclease RuvC.